The following is a 462-amino-acid chain: Cysteine--tRNA ligase (462 aa).

Cys27 serves as a coordination point for Zn(2+). The short motif at 29–39 is the 'HIGH' region element; the sequence is PTVYDLAHIGN. 3 residues coordinate Zn(2+): Cys211, His236, and Glu240. The 'KMSKS' region signature appears at 270–274; that stretch reads KMSKS. Position 273 (Lys273) interacts with ATP.

The protein belongs to the class-I aminoacyl-tRNA synthetase family. Monomer. Zn(2+) is required as a cofactor.

The protein localises to the cytoplasm. The catalysed reaction is tRNA(Cys) + L-cysteine + ATP = L-cysteinyl-tRNA(Cys) + AMP + diphosphate. The protein is Cysteine--tRNA ligase of Anaplasma phagocytophilum (strain HZ).